The following is a 355-amino-acid chain: Probable cinnamyl alcohol dehydrogenase (355 aa).

Cys-47 provides a ligand contact to Zn(2+). Residue Ser-49 coordinates NADP(+). The Zn(2+) site is built by His-69, Glu-70, Cys-100, Cys-103, Cys-106, Cys-114, and Cys-162. Residues Thr-166, 187 to 192, 210 to 215, Thr-250, Gly-274, and 297 to 299 contribute to the NADP(+) site; these read GLGGVG, SSSDKK, and SFI.

This sequence belongs to the zinc-containing alcohol dehydrogenase family. Homodimer. Zn(2+) is required as a cofactor.

It catalyses the reaction (E)-cinnamyl alcohol + NADP(+) = (E)-cinnamaldehyde + NADPH + H(+). The catalysed reaction is (E)-coniferol + NADP(+) = (E)-coniferaldehyde + NADPH + H(+). It carries out the reaction (E)-sinapyl alcohol + NADP(+) = (E)-sinapaldehyde + NADPH + H(+). The enzyme catalyses (E)-4-coumaroyl alcohol + NADP(+) = (E)-4-coumaraldehyde + NADPH + H(+). It catalyses the reaction (E)-caffeyl alcohol + NADP(+) = (E)-caffeyl aldehyde + NADPH + H(+). It participates in aromatic compound metabolism; phenylpropanoid biosynthesis. Involved in lignin biosynthesis. Catalyzes the final step specific for the production of lignin monomers. Catalyzes the NADPH-dependent reduction of coniferaldehyde, 5-hydroxyconiferaldehyde, sinapaldehyde, 4-coumaraldehyde and caffeyl aldehyde to their respective alcohols. The protein is Probable cinnamyl alcohol dehydrogenase (CAD1) of Eucalyptus botryoides (Southern mahogany).